Reading from the N-terminus, the 280-residue chain is Dexamethasone-induced Ras-related protein 1 (280 aa).

Residue C11 is modified to S-nitrosocysteine. 31–38 (GSSKVGKT) is a binding site for GTP. An Effector region motif is present at residues 53–61 (YTPTIEDFH). GTP contacts are provided by residues 78–82 (DTSGN) and 145–148 (NKGD). Cysteine methyl ester is present on C277. Residue C277 is the site of S-farnesyl cysteine attachment. Positions 278 to 280 (VIS) are cleaved as a propeptide — removed in mature form.

The protein belongs to the small GTPase superfamily. RasD family. Component of a complex, at least composed of APBB1, RASD1/DEXRAS1 and APP. Interacts with APBB1/FE65. Forms a ternary complex with CAPON and NOS1. In terms of processing, S-nitrosylation stimulates guanine-nucleotide exchange activity. In terms of tissue distribution, expressed in brain, heart, kidney and liver.

The protein resides in the cell membrane. It is found in the cytoplasm. The protein localises to the perinuclear region. Its subcellular location is the nucleus. Its function is as follows. Small GTPase. Negatively regulates the transcription regulation activity of the APBB1/FE65-APP complex via its interaction with APBB1/FE65. The chain is Dexamethasone-induced Ras-related protein 1 (Rasd1) from Mus musculus (Mouse).